Reading from the N-terminus, the 1176-residue chain is Nitrite reductase [NAD(P)H] (1176 aa).

Residues 1 to 23 are disordered; the sequence is MANTSLDMASSTSPSPSPESTTT. Low complexity predominate over residues 10–23; sequence SSTSPSPSPESTTT. 26 to 60 lines the FAD pocket; the sequence is KRIVVVGLGMVGIAFIEKLIKLDTQRQYEIVVIGE. 183 to 215 lines the NAD(+) pocket; that stretch reads STGVVVGGGLLGLEAAKALMDLQVFGRVVVIER. Residues cysteine 496, cysteine 498, cysteine 531, and cysteine 534 each coordinate [2Fe-2S] cluster. 4 residues coordinate [4Fe-4S] cluster: cysteine 717, cysteine 723, cysteine 757, and cysteine 761. Cysteine 761 is a siroheme binding site. In terms of domain architecture, Rieske; atypical spans 942 to 1094; sequence SYFQGADDLP…VEERDDGMVY (153 aa). 2 residues coordinate [2Fe-2S] cluster: cysteine 981 and histidine 983. Composition is skewed to low complexity over residues 998–1008 and 1030–1049; these read PSPSSCSSSAL and PTSS…TNPS. The segment at 998-1051 is disordered; that stretch reads PSPSSCSSSALPPSPPSTPPRSSSPVTSPPQSPTSSATPATTASSSCTTNPSGP. Positions 1058 and 1061 each coordinate [2Fe-2S] cluster. Basic and acidic residues predominate over residues 1124–1139; that stretch reads LRELDELNKSKGVEGK. Residues 1124–1157 form a disordered region; sequence LRELDELNKSKGVEGKKGRRGRKPGASEAGKEVG.

It belongs to the nitrite and sulfite reductase 4Fe-4S domain family. In terms of assembly, homodimer. Siroheme serves as cofactor. [4Fe-4S] cluster is required as a cofactor. Requires FAD as cofactor. The cofactor is [2Fe-2S] cluster.

It catalyses the reaction NH4(+) + 3 NADP(+) + 2 H2O = nitrite + 3 NADPH + 5 H(+). It carries out the reaction NH4(+) + 3 NAD(+) + 2 H2O = nitrite + 3 NADH + 5 H(+). It participates in nitrogen metabolism; nitrate reduction (assimilation). This Neurospora crassa (strain ATCC 24698 / 74-OR23-1A / CBS 708.71 / DSM 1257 / FGSC 987) protein is Nitrite reductase [NAD(P)H] (nit-6).